Consider the following 227-residue polypeptide: Phosphoglycolate phosphatase (227 aa).

D8 (nucleophile) is an active-site residue. Residues D8 and D10 each coordinate Mg(2+). K152 is a substrate binding site. Residues D175 and D179 each coordinate Mg(2+).

Belongs to the archaeal SPP-like hydrolase family. The cofactor is Mg(2+).

The enzyme catalyses 2-phosphoglycolate + H2O = glycolate + phosphate. Catalyzes the dephosphorylation of 2-phosphoglycolate. This is Phosphoglycolate phosphatase from Halorubrum lacusprofundi (strain ATCC 49239 / DSM 5036 / JCM 8891 / ACAM 34).